A 183-amino-acid chain; its full sequence is MTVLSFTLMVNQFYLTRGFRLIEGKGRMSYIVKAHRLFGYISVGFLLFHPLLEVLPRQFEGSIQPFDAFWKIITTDNSAILLGIAGWAVMLTLAVTSVLRKRLFKNYRKWRTFHGILAVVLITVVGYHVLVLGRHSSLAMKAFYAVLLAGGYVTMIKTYVFDLRREEKWKNRGLKLAEDSSSP.

A run of 4 helical transmembrane segments spans residues 37-59 (LFGY…PRQF), 79-98 (AILL…VTSV), 110-132 (WRTF…VLVL), and 142-161 (AFYA…TYVF).

It localises to the cell membrane. This is an uncharacterized protein from Archaeoglobus fulgidus (strain ATCC 49558 / DSM 4304 / JCM 9628 / NBRC 100126 / VC-16).